The primary structure comprises 471 residues: MAKIPLILSFCLLEAFLGAESTVFIENKEASTVLSRTRRGNSNRLEELIPGNLERECIEEKCSFEEAREVFENTEKTMEFWKIYIDGDQCNSNPCKNGAVCKDGVSSYECMCPPGYGGRNCEIDSTCATKNGGCEHFCRHDTPQKAVCSCASGYKLHEDGKSCKPAVPYPCGRITAPEMRGKVTRTENTIERWNITAHDEGDAHDEALDITEPPPPPTTSAAPAKIVPITKNDTRVVGGYDSVKGQLPWQVHLVDSRGLGFCGGSIINEKWVVTAAHCLEPGDNVTAVAGEYNTKEDDHTEQRRQVVKILPYPTYNRTRNKHHNDIALLELDQPLTFNSYVTPICIGSRDFTNNLLSNGPGTVSGWGSMLYRGRSAIVLQVLTVPFVDRVTCLKSTSTTILHSMFCAGYTAGGKDTCGGDSGGPYTNSIGETWFLTGVTSWGEECAKPGKYGIYTKVAKYVKWIRETTRLT.

A signal peptide spans 1 to 19 (MAKIPLILSFCLLEAFLGA). Residues 20-39 (ESTVFIENKEASTVLSRTRR) constitute a propeptide that is removed on maturation. A Gla domain is found at 40-85 (GNSNRLEELIPGNLERECIEEKCSFEEAREVFENTEKTMEFWKIYI). 10 residues coordinate Ca(2+): Asn-41, Glu-46, Glu-47, Glu-54, Glu-56, Glu-59, Glu-60, Glu-65, Glu-66, and Glu-69. 4-carboxyglutamate occurs at positions 46, 47, 54, 56, 59, 60, 65, 66, 69, 72, 75, and 79. Position 54 (Glu-54) interacts with Mg(2+). A disulfide bridge links Cys-57 with Cys-62. Glu-59 contributes to the Mg(2+) binding site. A Mg(2+)-binding site is contributed by Glu-65. Glu-69 lines the Mg(2+) pocket. Ca(2+) contacts are provided by Glu-75, Glu-79, Asp-86, Gly-87, and Gln-89. Glu-75 and Glu-79 together coordinate Mg(2+). Residues 86-122 (DGDQCNSNPCKNGAVCKDGVSSYECMCPPGYGGRNCE) enclose the EGF-like 1; calcium-binding domain. Intrachain disulfides connect Cys-90–Cys-101, Cys-95–Cys-110, Cys-112–Cys-121, Cys-127–Cys-138, Cys-134–Cys-148, Cys-150–Cys-163, Cys-171–Cys-345, Cys-262–Cys-278, Cys-392–Cys-406, and Cys-417–Cys-445. O-linked (Glc...) serine glycosylation is present at Ser-92. Residue Asp-103 coordinates Ca(2+). A (3R)-3-hydroxyaspartate modification is found at Asp-103. Ser-107 is subject to Phosphoserine. Residues 123–164 (IDSTCATKNGGCEHFCRHDTPQKAVCSCASGYKLHEDGKSCK) form the EGF-like 2 domain. The propeptide at 186 to 235 (TENTIERWNITAHDEGDAHDEALDITEPPPPPTTSAAPAKIVPITKNDTR) is activation peptide. The 234-residue stretch at 236–469 (VVGGYDSVKG…YVKWIRETTR (234 aa)) folds into the Peptidase S1 domain. His-277 serves as the catalytic Charge relay system. Positions 291, 293, 296, and 301 each coordinate Ca(2+). The active-site Charge relay system is the Asp-325. The active-site Charge relay system is the Ser-421.

The protein belongs to the peptidase S1 family. Heterodimer of a light chain and a heavy chain; disulfide-linked. Post-translationally, activated by factor XIa, which excises the activation peptide. The propeptide can also be removed by snake venom protease. Activated by coagulation factor VIIa-tissue factor (F7-F3) complex in calcium-dependent manner. The iron and 2-oxoglutarate dependent 3-hydroxylation of aspartate and asparagine is (R) stereospecific within EGF domains.

The protein localises to the secreted. The catalysed reaction is Selective cleavage of Arg-|-Ile bond in factor X to form factor Xa.. Factor IX is a vitamin K-dependent plasma protein that participates in the intrinsic pathway of blood coagulation by converting factor X to its active form in the presence of Ca(2+) ions, phospholipids, and factor VIIIa. The sequence is that of Coagulation factor IX (F9) from Gallus gallus (Chicken).